The following is an 857-amino-acid chain: Autoinducer 2 sensor kinase/phosphatase LuxQ (857 aa).

Transmembrane regions (helical) follow at residues 14–34 and 283–303; these read IASFITHAVVVVMGVLIVSVL and FWMAFALISMIGVSIASRWWL. In terms of domain architecture, Histidine kinase spans 486-706; it reads KMSHELRTPL…RFEIQLPIEL (221 aa). H489 carries the post-translational modification Phosphohistidine; by autocatalysis. Residues 731–846 enclose the Response regulatory domain; it reads RVLLVEDNHT…TLHKALEHFK (116 aa). A 4-aspartylphosphate modification is found at D780.

Binds the complex formed by AI-2 and LuxP.

The protein localises to the cell inner membrane. The enzyme catalyses ATP + protein L-histidine = ADP + protein N-phospho-L-histidine.. Its function is as follows. At low cell density, in absence of AI-2 (autoinducer 2), LuxQ has a kinase activity and autophosphorylates on a histidine residue. The phosphoryl group is then transferred to an aspartate residue in the response regulator domain. The phosphoryl group is transferred to LuxU, and ultimately to LuxO. At high cell density, in the presence of AI-2, the kinase activity is inactivated, and the response regulator domain has a phosphatase activity. This Vibrio cholerae serotype O1 (strain ATCC 39315 / El Tor Inaba N16961) protein is Autoinducer 2 sensor kinase/phosphatase LuxQ (luxQ).